We begin with the raw amino-acid sequence, 256 residues long: Post-translational flagellin modification protein A (256 aa).

S145 lines the substrate pocket. Y168 (proton acceptor) is an active-site residue.

Belongs to the short-chain dehydrogenases/reductases (SDR) family.

Functionally, required for biosynthesis of LAH modification in the post-translational modification of Campylobacter coli flagellin. In Campylobacter coli, this protein is Post-translational flagellin modification protein A (ptmA).